The sequence spans 335 residues: MTEIYDFDKSAWDIKGSIAPIQPTTYSDGRLVPQVRVIDPGLGDRKDECFMYMFLLGVVEDSDPLGPPIGRAFGSLPLGVGRSTAKPEELLKEATELDIVVRRTAGLNEKLVFYNNTPLTLLTPWRKVLTTGSVFNANQVCNAVNLIPLDTPQRFRVVYMSITRLSDNGYYTVPRRMLEFRSVNAVAFNLLVTLRIDKAIGPGKIIDNAEQLPEATFMVHIGNFRRKKSEVYSADYCKMKIEKMGLVFALGGIGGTSLHIRSTGKMSKTLHAQLGFKKTLCYPLMDINEDLNRLLWRSRCKIVRIQAVLQPSVPQEFRIYDDVIINDDQGLFKVL.

Belongs to the morbillivirus/respirovirus/rubulavirus M protein family. In terms of assembly, homodimer. Dimerization is critical for virion formation. Interacts with host ANP32B.

The protein resides in the virion. Its subcellular location is the host cell membrane. The M protein has a crucial role in virus assembly and interacts with the RNP complex as well as with the viral membrane. Associates with phosphatidylserine (PS) and phosphatidylinositol 4,5-bisphosphate (PIP2) at the plasma membrane. Interaction with PIP2 triggers matrix protein lattice polymerization. Matrix proteins induce host membrane deformation and curvature necessary for virion assembly/budding. This Homo sapiens (Human) protein is Matrix protein (M).